The sequence spans 266 residues: MIIRFLALLFSAVVLVSLGHAQEKTHESSNWGKYFSDFNAKGTIVVVDERTNGNSTSVYNESRAQQRYSPASTFKIPHTLFALDAGAVRDEFHVFRWDGAKRSFAGHNQDQNLRSAMRNSTVWVYQLFAKEIGENKARSYLEKLNYGNADPSTKSGDYWIDGNLAISANEQISILKKLYRNELPFRVEHQRLVKDLMIVEAKRDWILRAKTGWDGQMGWWVGWVEWPTGPVFFALNIDTPNRMEDLHKREAIARAILQSVNALPPN.

An N-terminal signal peptide occupies residues 1–21 (MIIRFLALLFSAVVLVSLGHA). Ser-72 acts as the Acyl-ester intermediate in catalysis. N6-carboxylysine is present on Lys-75. 210–212 (KTG) lines the substrate pocket.

This sequence belongs to the class-D beta-lactamase family.

The enzyme catalyses a beta-lactam + H2O = a substituted beta-amino acid. With respect to regulation, inhibited by clavulanic acid. Its function is as follows. This is an oxacillin-hydrolyzing beta-lactamase. The sequence is that of Beta-lactamase OXA-20 (bla) from Pseudomonas aeruginosa.